A 445-amino-acid chain; its full sequence is Ribosomal protein uS12 methylthiotransferase RimO (445 aa).

The 111-residue stretch at 10-120 (PKVGFVSLGC…VVNAVHEVVP (111 aa)) folds into the MTTase N-terminal domain. [4Fe-4S] cluster-binding residues include Cys19, Cys55, Cys84, Cys153, Cys157, and Cys160. The Radical SAM core domain maps to 139–378 (LTPRHYAYLK…AHQQEISSAR (240 aa)). A TRAM domain is found at 380–445 (QQRIGKEIEV…DEYDLWAETL (66 aa)).

It belongs to the methylthiotransferase family. RimO subfamily. [4Fe-4S] cluster is required as a cofactor.

The protein localises to the cytoplasm. It carries out the reaction L-aspartate(89)-[ribosomal protein uS12]-hydrogen + (sulfur carrier)-SH + AH2 + 2 S-adenosyl-L-methionine = 3-methylsulfanyl-L-aspartate(89)-[ribosomal protein uS12]-hydrogen + (sulfur carrier)-H + 5'-deoxyadenosine + L-methionine + A + S-adenosyl-L-homocysteine + 2 H(+). Its function is as follows. Catalyzes the methylthiolation of an aspartic acid residue of ribosomal protein uS12. This is Ribosomal protein uS12 methylthiotransferase RimO from Pseudomonas fluorescens (strain ATCC BAA-477 / NRRL B-23932 / Pf-5).